Consider the following 193-residue polypeptide: Flagellin B3 (193 aa).

Positions 1–12 (MFEFITDEDERG) are excised as a propeptide.

The protein belongs to the archaeal flagellin family. In terms of processing, glycosylated.

Its subcellular location is the archaeal flagellum. Its function is as follows. Flagellin is the subunit protein which polymerizes to form the filaments of archaeal flagella. The sequence is that of Flagellin B3 (flaB3) from Halobacterium salinarum (strain ATCC 700922 / JCM 11081 / NRC-1) (Halobacterium halobium).